A 431-amino-acid chain; its full sequence is E3 ubiquitin-protein ligase RNF128 (431 aa).

Residues 1–38 form the signal peptide; sequence MGQLPGAGVFCRGGCGFSRLLAWCFLLVLSPQTPGSRG. N-linked (GlcNAc...) asparagine glycosylation is found at asparagine 48, asparagine 59, and asparagine 101. The 112-residue stretch at 75-186 folds into the PA domain; sequence SPLEPVAGVL…LKGTKILQSI (112 aa). The helical transmembrane segment at 211 to 231 threads the bilayer; it reads IFFVSVSFFIITAATVGYFIF. The RING-type; atypical zinc finger occupies 280–321; that stretch reads CAVCIELYKPNDLVRILTCNHVFHKTCVDPWLLEHRTCPMCK. A compositionally biased stretch (polar residues) spans 345 to 354; sequence VSNETSSNAS. The interval 345–431 is disordered; it reads VSNETSSNAS…QETTVREIKS (87 aa).

Post-translationally, auto-ubiquitinated. Controls the development of T-cell clonal anergy by ubiquitination.

The protein resides in the cytoplasm. The protein localises to the endomembrane system. It is found in the cytoskeleton. Its subcellular location is the perinuclear region. The catalysed reaction is S-ubiquitinyl-[E2 ubiquitin-conjugating enzyme]-L-cysteine + [acceptor protein]-L-lysine = [E2 ubiquitin-conjugating enzyme]-L-cysteine + N(6)-ubiquitinyl-[acceptor protein]-L-lysine.. It functions in the pathway protein modification; protein ubiquitination. E3 ubiquitin-protein ligase that catalyzes 'Lys-27', 'Lys-48'- or 'Lys-63'-linked polyubiquitin chains formation and plays a role in different biological processes such as modulation of immune response, cytoskeletal dynamics or protein homeostasis. Inhibits IL2 and IL4 transcription, thereby playing an important role in the induction of the anergic phenotype, a long-term stable state of T-lymphocyte unresponsiveness to antigenic stimulation associated with the blockade of interleukin production. Ubiquitinates ARPC5 with 'Lys-48' linkages and COR1A with 'Lys-63' linkages leading to their degradation, down-regulation of these cytoskeletal components results in impaired lamellipodium formation and reduced accumulation of F-actin at the immunological synapse. Functions in the patterning of the dorsal ectoderm; sensitizes ectoderm to respond to neural-inducing signals. Plays a positive role in innate immune response by promoting 'Lys-63'-linked ubiquitination of TBK1 after RNA- or DNA-virus infection. Regulates alveolar macrophage activation and neutrophil infiltration by interacting with TLR4, targeting it for degradation, and inhibiting NF-kappa-B activation, hence decreasing pro-inflammatory cytokines. Negatively regulates the IL-3/STAT5 signaling pathway by facilitating 'Lys-27'-linked polyubiquitination of IL3RA leading to its degradation via lysosomal pathway. Directly regulates the N-glycosylation process in the endoplasmic reticulum by targeting the glycosyl-transferase RPN1 for ubiquitination and degradation. Other substrates targeted for degradation by RNF128 include transmembrane proteins CD40L, CD83 or the tetraspanin CD151. This is E3 ubiquitin-protein ligase RNF128 (RNF128) from Bos taurus (Bovine).